The primary structure comprises 261 residues: Cytochrome c oxidase subunit 3 (261 aa).

Residues 1 to 15 (MAHQSHAYHMVKPSP) lie on the Mitochondrial matrix side of the membrane. The helical transmembrane segment at 16–34 (WPLTGALSALLTTSGLTMW) threads the bilayer. Topologically, residues 35-40 (FHFHST) are mitochondrial intermembrane. Residues 41–66 (TLLLTGLLTNALTMYQWWRDVVREST) traverse the membrane as a helical segment. Over 67–72 (YQGHHT) the chain is Mitochondrial matrix. Residues 73–105 (LPVQKGLRYGMILFITSEVFFFAGFFWAFYHSS) form a helical membrane-spanning segment. Over 106 to 128 (LAPTPQLGGHWPPTGIIPLNPLE) the chain is Mitochondrial intermembrane. A helical transmembrane segment spans residues 129 to 152 (VPLLNTSVLLASGVSITWAHHSLM). Residues 153-155 (ENN) are Mitochondrial matrix-facing. A helical transmembrane segment spans residues 156-183 (RTQMIQALLITILLGIYFTLLQASEYIE). At 184–190 (APFTISD) the chain is on the mitochondrial intermembrane side. A helical transmembrane segment spans residues 191-223 (GIYGSTFFMATGFHGLHVIIGSTFLTVCLARQL). The Mitochondrial matrix segment spans residues 224–232 (LFHFTSKHH). The helical transmembrane segment at 233–256 (FGFEAAAWYWHFVDVVWLFLYVSI) threads the bilayer. Topologically, residues 257-261 (YWWGS) are mitochondrial intermembrane.

It belongs to the cytochrome c oxidase subunit 3 family. Component of the cytochrome c oxidase (complex IV, CIV), a multisubunit enzyme composed of 14 subunits. The complex is composed of a catalytic core of 3 subunits MT-CO1, MT-CO2 and MT-CO3, encoded in the mitochondrial DNA, and 11 supernumerary subunits COX4I, COX5A, COX5B, COX6A, COX6B, COX6C, COX7A, COX7B, COX7C, COX8 and NDUFA4, which are encoded in the nuclear genome. The complex exists as a monomer or a dimer and forms supercomplexes (SCs) in the inner mitochondrial membrane with NADH-ubiquinone oxidoreductase (complex I, CI) and ubiquinol-cytochrome c oxidoreductase (cytochrome b-c1 complex, complex III, CIII), resulting in different assemblies (supercomplex SCI(1)III(2)IV(1) and megacomplex MCI(2)III(2)IV(2)).

The protein localises to the mitochondrion inner membrane. The catalysed reaction is 4 Fe(II)-[cytochrome c] + O2 + 8 H(+)(in) = 4 Fe(III)-[cytochrome c] + 2 H2O + 4 H(+)(out). Functionally, component of the cytochrome c oxidase, the last enzyme in the mitochondrial electron transport chain which drives oxidative phosphorylation. The respiratory chain contains 3 multisubunit complexes succinate dehydrogenase (complex II, CII), ubiquinol-cytochrome c oxidoreductase (cytochrome b-c1 complex, complex III, CIII) and cytochrome c oxidase (complex IV, CIV), that cooperate to transfer electrons derived from NADH and succinate to molecular oxygen, creating an electrochemical gradient over the inner membrane that drives transmembrane transport and the ATP synthase. Cytochrome c oxidase is the component of the respiratory chain that catalyzes the reduction of oxygen to water. Electrons originating from reduced cytochrome c in the intermembrane space (IMS) are transferred via the dinuclear copper A center (CU(A)) of subunit 2 and heme A of subunit 1 to the active site in subunit 1, a binuclear center (BNC) formed by heme A3 and copper B (CU(B)). The BNC reduces molecular oxygen to 2 water molecules using 4 electrons from cytochrome c in the IMS and 4 protons from the mitochondrial matrix. The chain is Cytochrome c oxidase subunit 3 (MT-CO3) from Pongo abelii (Sumatran orangutan).